A 516-amino-acid polypeptide reads, in one-letter code: Replication factor C large subunit (516 aa).

ATP is bound at residue 44–51; the sequence is GAPGVGKT. Positions 421-516 are disordered; the sequence is RSEAVEAHAG…DGQAGLSEFM (96 aa). Basic and acidic residues predominate over residues 454 to 467; the sequence is VQSHKSAESGDDTV. Residues 479-496 show a composition bias toward low complexity; the sequence is QSGASETASATESASDSD. Residues 497–508 are compositionally biased toward acidic residues; sequence ASTDTDADDDDG.

Belongs to the activator 1 small subunits family. RfcL subfamily. Heteromultimer composed of small subunits (RfcS) and large subunits (RfcL).

In terms of biological role, part of the RFC clamp loader complex which loads the PCNA sliding clamp onto DNA. This chain is Replication factor C large subunit, found in Haloquadratum walsbyi (strain DSM 16790 / HBSQ001).